Reading from the N-terminus, the 482-residue chain is Phenylalanine--tRNA ligase alpha subunit (482 aa).

Residues T327, 366-368 (QIE), and Y406 each bind L-phenylalanine. Residue E408 coordinates Mg(2+). Residue F430 coordinates L-phenylalanine.

Belongs to the class-II aminoacyl-tRNA synthetase family. Phe-tRNA synthetase alpha subunit type 2 subfamily. As to quaternary structure, tetramer of two alpha and two beta subunits. Mg(2+) is required as a cofactor.

It is found in the cytoplasm. The enzyme catalyses tRNA(Phe) + L-phenylalanine + ATP = L-phenylalanyl-tRNA(Phe) + AMP + diphosphate + H(+). This is Phenylalanine--tRNA ligase alpha subunit from Thermoplasma volcanium (strain ATCC 51530 / DSM 4299 / JCM 9571 / NBRC 15438 / GSS1).